The primary structure comprises 567 residues: Ribulokinase (567 aa).

Belongs to the ribulokinase family.

The enzyme catalyses D-ribulose + ATP = D-ribulose 5-phosphate + ADP + H(+). The catalysed reaction is L-ribulose + ATP = L-ribulose 5-phosphate + ADP + H(+). Its pathway is carbohydrate degradation; L-arabinose degradation via L-ribulose; D-xylulose 5-phosphate from L-arabinose (bacterial route): step 2/3. This Vibrio parahaemolyticus serotype O3:K6 (strain RIMD 2210633) protein is Ribulokinase.